The chain runs to 407 residues: MTNPTSDGQPRGRLRVLVLGSTGSIGTQALQVIAANPDRFEVVGLAAGGANLDTLLRQRAETGVTNVAVADEHAARRAGDIPFCGPEAATRLVEETEADVVLNALVGALGLRPTLAALESGARLALANKESLIAGGPLVLAAAAPGQIVPVDSEHSALAQCLRGGTGDEVAKLVLTASGGPFRGWTAEELEHVTPEQAGAHPTWSMGPMNTLNSASLVNKGLELIETHLLFGIPYDRIEVVVHPQSIVHSMVTFVDGSTLAQASPPDMRLPISLALGWPHRVPGAAACCDFSTASSWEFEPLDNEVFPAVELARHAGQAGGCMTAIYNAANEEAAAAFLAGRVSFGAIVETIADVLHAADQWAPKFSETPANVDDVLDAQRWARQQAQRAVAQARPATVSAKTPGVV.

Thr22, Gly23, Ser24, Ile25, Gly48, Asn51, and Asn128 together coordinate NADPH. Lys129 provides a ligand contact to 1-deoxy-D-xylulose 5-phosphate. NADPH is bound at residue Glu130. Asp152 is a Mn(2+) binding site. 4 residues coordinate 1-deoxy-D-xylulose 5-phosphate: Ser153, Glu154, Ser178, and His201. Glu154 provides a ligand contact to Mn(2+). Gly207 is a binding site for NADPH. Residues Ser214, Asn219, Lys220, and Glu223 each coordinate 1-deoxy-D-xylulose 5-phosphate. Glu223 is a binding site for Mn(2+).

The protein belongs to the DXR family. The cofactor is Mg(2+). Mn(2+) serves as cofactor.

It carries out the reaction 2-C-methyl-D-erythritol 4-phosphate + NADP(+) = 1-deoxy-D-xylulose 5-phosphate + NADPH + H(+). Its pathway is isoprenoid biosynthesis; isopentenyl diphosphate biosynthesis via DXP pathway; isopentenyl diphosphate from 1-deoxy-D-xylulose 5-phosphate: step 1/6. In terms of biological role, catalyzes the NADPH-dependent rearrangement and reduction of 1-deoxy-D-xylulose-5-phosphate (DXP) to 2-C-methyl-D-erythritol 4-phosphate (MEP). This chain is 1-deoxy-D-xylulose 5-phosphate reductoisomerase, found in Mycobacterium avium (strain 104).